We begin with the raw amino-acid sequence, 276 residues long: NH(3)-dependent NAD(+) synthetase (276 aa).

Residue 46–53 (GISGGQDS) coordinates ATP. Residue aspartate 52 coordinates Mg(2+). Arginine 141 lines the deamido-NAD(+) pocket. Threonine 161 contributes to the ATP binding site. Residue glutamate 166 coordinates Mg(2+). Lysine 174 and aspartate 181 together coordinate deamido-NAD(+). ATP is bound by residues lysine 190 and threonine 212. 261 to 262 (HK) contributes to the deamido-NAD(+) binding site.

This sequence belongs to the NAD synthetase family. Homodimer.

It carries out the reaction deamido-NAD(+) + NH4(+) + ATP = AMP + diphosphate + NAD(+) + H(+). It participates in cofactor biosynthesis; NAD(+) biosynthesis; NAD(+) from deamido-NAD(+) (ammonia route): step 1/1. Catalyzes the ATP-dependent amidation of deamido-NAD to form NAD. Uses ammonia as a nitrogen source. The chain is NH(3)-dependent NAD(+) synthetase from Limosilactobacillus fermentum (strain NBRC 3956 / LMG 18251) (Lactobacillus fermentum).